The chain runs to 324 residues: IDS-like terpene synthase 3 (324 aa).

The Mg(2+) site is built by aspartate 77 and aspartate 81.

This sequence belongs to the FPP/GGPP synthase family. Mg(2+) serves as cofactor.

The enzyme catalyses (2E)-geranyl diphosphate + H2O = linalool + diphosphate. It catalyses the reaction (2E,6E)-farnesyl diphosphate + H2O = (6E)-nerolidol + diphosphate. Functionally, terpene synthase that shows monoterpene synthase activity and produces linalool, using geranyl diphosphate (GPP) as substrate. Also shows sesquiterpene synthase activity as it is able to convert farnesyl diphosphate (FPP) into (E)-nerolidol. The polypeptide is IDS-like terpene synthase 3 (Melampsora lini (Rust fungus)).